Reading from the N-terminus, the 316-residue chain is Elongation factor Ts, mitochondrial (316 aa).

The N-terminal 18 residues, 1–18, are a transit peptide targeting the mitochondrion; the sequence is MFARAPFVRLLSTTSRNL. Positions 245–269 are disordered; the sequence is EAAESVKTQEGLRSQEGHDPNADPV.

Belongs to the EF-Ts family.

It localises to the mitochondrion. Associates with the EF-Tu.GDP complex and induces the exchange of GDP to GTP. It remains bound to the aminoacyl-tRNA.EF-Tu.GTP complex up to the GTP hydrolysis stage on the ribosome. This is Elongation factor Ts, mitochondrial from Caenorhabditis elegans.